Here is a 691-residue protein sequence, read N- to C-terminus: Threonine--tRNA ligase (691 aa).

The region spanning 1–69 is the TGS domain; it reads MSTPEITPAA…QQDVEVAAVP (69 aa). Residues 268–574 form a catalytic region; that stretch reads DHRRLGQELD…LLEHYAGAFP (307 aa). 3 residues coordinate Zn(2+): Cys373, His424, and His551.

It belongs to the class-II aminoacyl-tRNA synthetase family. Homodimer. It depends on Zn(2+) as a cofactor.

The protein resides in the cytoplasm. The enzyme catalyses tRNA(Thr) + L-threonine + ATP = L-threonyl-tRNA(Thr) + AMP + diphosphate + H(+). Catalyzes the attachment of threonine to tRNA(Thr) in a two-step reaction: L-threonine is first activated by ATP to form Thr-AMP and then transferred to the acceptor end of tRNA(Thr). Also edits incorrectly charged L-seryl-tRNA(Thr). This chain is Threonine--tRNA ligase, found in Corynebacterium jeikeium (strain K411).